The following is an 805-amino-acid chain: MVTSPFSLSPFGQARSTVTGNPLDPTELNQMHGFWRAANYLAVGMIYLRDNPLLREPLQPEQIKHRLLGHWGSSPGISFLYTHLNRIIRKFDQDMLYMVGPGHGAPGFLGPCYLEGSYSRFFAECSEDEDGMKRFFKQFSFPGGIGSHCTPETPGSIHEGGELGYCLSHAYGAAFDNPNLIVVGLAGDGESETGPLATSWHSNKFINPIRDGAVLPVLHLNGYKINNPSVLSRISHEELKALFEGYGYTPYFVEGSDPESMHQAMAATLDHCVSEIHQIQQEARSTGIAVRPRWPMVVMRTPKGWTGPDYVDGHKVEGFWRSHQVPMGGMHENPAHLQQLEAWMRSYKPEELFDEQGTLKPGFKAIAPEGDKRLGSTPYANGGLLRRGLKMPDFRQYGIDVDQPGTIEAPNTAPLGVFLRDVMANNMTNFRLFGPDENSSNKLHAVYEVSKKFWIAEYLEEDQDGGELSPDGRVMEMLSEHTLEGWLEAYLLTGRHGFFATYESFAHVITSMVNQHAKWLDICRHLNWRADISSLNILMTSTVWRQDHNGFTHQDPGFLDVILNKSPDVVRIYLPPDVNSLLSVADHCLQSKNYINIIVCDKQAHLQYQDMTSAIRNCTKGVDIWEWASNDAGTEPDVVMAAAGDIPTKEALAATAMLRQFFPNLRIRFVSVIDLLKLQPESEHPHGLSDRDFDSLFTTDKPIIFNFHAYPWLIHRLTYRRTNHGNLHVRGYKEKGNINTPMDLAIQNQIDRFSLAIDVIDRLPQLRVAGAHIKEMLKDMQIDCTNYAYEHGIDMPEIVNWRWPL.

Belongs to the XFP family. It depends on thiamine diphosphate as a cofactor.

The protein is Probable phosphoketolase of Synechocystis sp. (strain ATCC 27184 / PCC 6803 / Kazusa).